We begin with the raw amino-acid sequence, 427 residues long: Transcobalamin-2 (427 aa).

A signal peptide spans 1–18 (MRHLGALLFLLGVLGALA). Intrachain disulfides connect Cys-21–Cys-267, Cys-116–Cys-309, and Cys-165–Cys-205. Residues Gln-104, 152 to 156 (TSYYQ), His-190, 190 to 194 (HHSVD), Asn-242, Ser-245, Gln-291, and 395 to 397 (WQL) contribute to the cob(II)alamin site.

This sequence belongs to the eukaryotic cobalamin transport proteins family. As to quaternary structure, interacts with CD320 (via LDL-receptor class A domains).

The protein localises to the secreted. In terms of biological role, primary vitamin B12-binding and transport protein. Delivers cobalamin to cells. This is Transcobalamin-2 (TCN2) from Pongo abelii (Sumatran orangutan).